The primary structure comprises 144 residues: uncharacterized protein (144 aa).

The stretch at 24-67 (KLKELYQRLNQGINVEEVLKETVEDYKEKMEKYILEVLEEIEKY) forms a coiled coil.

This is an uncharacterized protein from Aquifex aeolicus (strain VF5).